The following is a 102-amino-acid chain: Methane monooxygenase component D (102 aa).

As to quaternary structure, the soluble methane monooxygenase (sMMO) consists of four components A/MMOH (composed of alpha/MmoX, beta/MmoY and gamma/MmoZ), B/MMOB (MmoB), C/MMOR (MmoC) and D/MMOD (MmoD).

The protein is Methane monooxygenase component D (mmoD) of Methylosinus trichosporium.